A 443-amino-acid polypeptide reads, in one-letter code: tRNA (guanine-N(7)-)-methyltransferase non-catalytic subunit TRM82 (443 aa).

The tract at residues 67-93 (ASKKLKTNDGEPVAQPKKQAKVPKPGP) is disordered. 3 WD repeats span residues 97–137 (PVYQ…KDNI), 193–235 (GHVS…IVDK), and 239–279 (GHEE…LLFK).

This sequence belongs to the WD repeat TRM82 family. As to quaternary structure, forms a heterodimer with the catalytic subunit TRM8.

It localises to the nucleus. It functions in the pathway tRNA modification; N(7)-methylguanine-tRNA biosynthesis. Functionally, required for the formation of N(7)-methylguanine at position 46 (m7G46) in tRNA. In the complex, it is required to stabilize and induce conformational changes of the catalytic subunit. The sequence is that of tRNA (guanine-N(7)-)-methyltransferase non-catalytic subunit TRM82 from Kluyveromyces lactis (strain ATCC 8585 / CBS 2359 / DSM 70799 / NBRC 1267 / NRRL Y-1140 / WM37) (Yeast).